Consider the following 305-residue polypeptide: Homoserine O-acetyltransferase (305 aa).

The active-site Acyl-thioester intermediate is cysteine 142. Residues lysine 163 and serine 192 each coordinate substrate. Catalysis depends on histidine 235, which acts as the Proton acceptor. Residue glutamate 237 is part of the active site. Arginine 249 lines the substrate pocket.

It belongs to the MetA family.

The protein resides in the cytoplasm. It catalyses the reaction L-homoserine + acetyl-CoA = O-acetyl-L-homoserine + CoA. Its pathway is amino-acid biosynthesis; L-methionine biosynthesis via de novo pathway; O-acetyl-L-homoserine from L-homoserine: step 1/1. Functionally, transfers an acetyl group from acetyl-CoA to L-homoserine, forming acetyl-L-homoserine. This is Homoserine O-acetyltransferase from Bacteroides fragilis (strain ATCC 25285 / DSM 2151 / CCUG 4856 / JCM 11019 / LMG 10263 / NCTC 9343 / Onslow / VPI 2553 / EN-2).